We begin with the raw amino-acid sequence, 53 residues long: UPF0391 membrane protein PC1_0455 (53 aa).

A run of 2 helical transmembrane segments spans residues 4-24 and 30-47; these read WGII…GGLA and AAKI…LSLF.

It belongs to the UPF0391 family.

It is found in the cell membrane. The protein is UPF0391 membrane protein PC1_0455 of Pectobacterium carotovorum subsp. carotovorum (strain PC1).